The chain runs to 176 residues: Transcriptional repressor MprA (176 aa).

Residues Glu-26–Ser-160 form the HTH marR-type domain.

Functionally, negative regulator of the multidrug operon emrAB. The sequence is that of Transcriptional repressor MprA (mprA) from Escherichia coli O157:H7.